The primary structure comprises 139 residues: Large ribosomal subunit protein bL17 (139 aa).

The disordered stretch occupies residues 120 to 139; sequence EDAKGRDSGPTQDNSEAEAA.

Part of the 50S ribosomal subunit. Contacts protein L32. Post-translationally, may be methylated thrice, on undetermined residues.

The polypeptide is Large ribosomal subunit protein bL17 (Rhodopseudomonas palustris (strain ATCC BAA-98 / CGA009)).